Reading from the N-terminus, the 75-residue chain is Large ribosomal subunit protein bL31 (75 aa).

Belongs to the bacterial ribosomal protein bL31 family. Type A subfamily. Part of the 50S ribosomal subunit.

Functionally, binds the 23S rRNA. The polypeptide is Large ribosomal subunit protein bL31 (Chlorobium limicola (strain DSM 245 / NBRC 103803 / 6330)).